Here is a 252-residue protein sequence, read N- to C-terminus: Ribosomal RNA small subunit methyltransferase J (252 aa).

Residues 101–102 (RD), 117–118 (ER), 153–154 (SS), and aspartate 171 contribute to the S-adenosyl-L-methionine site.

This sequence belongs to the methyltransferase superfamily. RsmJ family.

It is found in the cytoplasm. It catalyses the reaction guanosine(1516) in 16S rRNA + S-adenosyl-L-methionine = N(2)-methylguanosine(1516) in 16S rRNA + S-adenosyl-L-homocysteine + H(+). Its function is as follows. Specifically methylates the guanosine in position 1516 of 16S rRNA. The protein is Ribosomal RNA small subunit methyltransferase J of Salmonella schwarzengrund (strain CVM19633).